The following is a 182-amino-acid chain: Small ribosomal subunit protein uS9 (182 aa).

The protein belongs to the universal ribosomal protein uS9 family.

The protein is Small ribosomal subunit protein uS9 of Corynebacterium efficiens (strain DSM 44549 / YS-314 / AJ 12310 / JCM 11189 / NBRC 100395).